A 576-amino-acid polypeptide reads, in one-letter code: MNIFNQLKQDIIVASRQLYNNQEIANTATIEIPKDSFNGDLSSNIAMIIAAKESIAPREVALKFKEVLITLPYIASIEIAGPGFINFTIKADSWQASIKDILQHEEKFFEIDIDKSRNINIEYVSANPTGPMHIGHARGAVYGDVLARILQKVSYSVTKEYYVNDAGSQINDLVSTVLLRYKEALGEQITIPAGLYPGEYLIPLGQILAKEYGNKLLTMNYAERFKIIKSFAVEKMLDLNRKDLADLGIKHDIFFSEQSLHDKGEIEETVKLLERMGLIYEGTLPAPKGKIHEEWDNRVQKLFKSTKYGDSQDRPIEKADGSWSYFASDLAYAKDKIERGANHLIYVLGADHSGYVKRIEAIVKALGKEQVKVDVKICQLVNFVENGVPVKMSKRLGSFASVQDVNHEVGKDIIRFMMLTRQNDKPLDFDLVKVKEQSRENPIFYVQYAHVRTISILSKAKELMPESYNNFESGKYDLSLLSSEEEIEIIKLLASWTKTLEASAKYFEPHRIAFYLINLASKFHSMWNFGKENSDYRFVIESNKELTLARLALASAIQKVIASGLEVIGVEPMNKM.

The 'HIGH' region motif lies at 128–136 (PTGPMHIGH).

The protein belongs to the class-I aminoacyl-tRNA synthetase family. Monomer.

It is found in the cytoplasm. The enzyme catalyses tRNA(Arg) + L-arginine + ATP = L-arginyl-tRNA(Arg) + AMP + diphosphate. This Rickettsia conorii (strain ATCC VR-613 / Malish 7) protein is Arginine--tRNA ligase.